Reading from the N-terminus, the 632-residue chain is Golgin subfamily A member 8J (632 aa).

Residues 1-76 (MAEETQHNKL…TSSATLKDLE (76 aa)) form a disordered region. Coiled-coil stretches lie at residues 86–154 (LDSR…HMKR) and 220–421 (LKVQ…SLMA). 2 stretches are compositionally biased toward basic and acidic residues: residues 352–362 (KQEERIQEQHK) and 427–440 (HGGE…EEAP). Disordered stretches follow at residues 352-377 (KQEE…FKEP), 423-452 (PGEG…DPES), and 496-524 (LSEP…DEGE). Residues 508–520 (LGGGHHQAGAQGG) are compositionally biased toward gly residues.

This sequence belongs to the GOLGA8 family.

This is Golgin subfamily A member 8J (GOLGA8J) from Homo sapiens (Human).